Consider the following 50-residue polypeptide: ATP synthase protein 8 (50 aa).

Residues 13–32 form a helical membrane-spanning segment; sequence ITFTFIILAITVYILSKYIL.

It belongs to the ATPase protein 8 family. As to quaternary structure, F-type ATPases have 2 components, CF(1) - the catalytic core - and CF(0) - the membrane proton channel.

Its subcellular location is the mitochondrion membrane. Mitochondrial membrane ATP synthase (F(1)F(0) ATP synthase or Complex V) produces ATP from ADP in the presence of a proton gradient across the membrane which is generated by electron transport complexes of the respiratory chain. F-type ATPases consist of two structural domains, F(1) - containing the extramembraneous catalytic core and F(0) - containing the membrane proton channel, linked together by a central stalk and a peripheral stalk. During catalysis, ATP synthesis in the catalytic domain of F(1) is coupled via a rotary mechanism of the central stalk subunits to proton translocation. Part of the complex F(0) domain. Minor subunit located with subunit a in the membrane. This chain is ATP synthase protein 8 (ATP8), found in Podospora anserina (strain S / ATCC MYA-4624 / DSM 980 / FGSC 10383) (Pleurage anserina).